We begin with the raw amino-acid sequence, 246 residues long: Probable phosphatase AHA_1344 (246 aa).

The Zn(2+) site is built by His-8, His-10, His-16, His-41, Glu-74, His-102, His-132, Asp-193, and His-195.

It belongs to the PHP family. Zn(2+) serves as cofactor.

This is Probable phosphatase AHA_1344 from Aeromonas hydrophila subsp. hydrophila (strain ATCC 7966 / DSM 30187 / BCRC 13018 / CCUG 14551 / JCM 1027 / KCTC 2358 / NCIMB 9240 / NCTC 8049).